We begin with the raw amino-acid sequence, 111 residues long: Small ribosomal subunit protein bS16 (111 aa).

Belongs to the bacterial ribosomal protein bS16 family.

This chain is Small ribosomal subunit protein bS16, found in Rickettsia prowazekii (strain Madrid E).